The following is a 141-amino-acid chain: Nucleoside diphosphate kinase (141 aa).

ATP is bound by residues lysine 11, phenylalanine 59, arginine 87, threonine 93, arginine 104, and asparagine 114. The active-site Pros-phosphohistidine intermediate is histidine 117.

It belongs to the NDK family. Homotetramer. Mg(2+) serves as cofactor.

Its subcellular location is the cytoplasm. The enzyme catalyses a 2'-deoxyribonucleoside 5'-diphosphate + ATP = a 2'-deoxyribonucleoside 5'-triphosphate + ADP. It catalyses the reaction a ribonucleoside 5'-diphosphate + ATP = a ribonucleoside 5'-triphosphate + ADP. Functionally, major role in the synthesis of nucleoside triphosphates other than ATP. The ATP gamma phosphate is transferred to the NDP beta phosphate via a ping-pong mechanism, using a phosphorylated active-site intermediate. The polypeptide is Nucleoside diphosphate kinase (Photorhabdus laumondii subsp. laumondii (strain DSM 15139 / CIP 105565 / TT01) (Photorhabdus luminescens subsp. laumondii)).